Consider the following 433-residue polypeptide: uncharacterized protein (433 aa).

The protein belongs to the mimivirus R160 family.

The protein resides in the virion. This is an uncharacterized protein from Acanthamoeba polyphaga mimivirus (APMV).